Reading from the N-terminus, the 608-residue chain is Glutamyl-tRNA(Gln) amidotransferase subunit E (608 aa).

The tract at residues 402 to 422 (EETRGANPDGTTRFLRPRPGA) is disordered.

This sequence belongs to the GatB/GatE family. GatE subfamily. In terms of assembly, heterodimer of GatD and GatE.

The catalysed reaction is L-glutamyl-tRNA(Gln) + L-glutamine + ATP + H2O = L-glutaminyl-tRNA(Gln) + L-glutamate + ADP + phosphate + H(+). In terms of biological role, allows the formation of correctly charged Gln-tRNA(Gln) through the transamidation of misacylated Glu-tRNA(Gln) in organisms which lack glutaminyl-tRNA synthetase. The reaction takes place in the presence of glutamine and ATP through an activated gamma-phospho-Glu-tRNA(Gln). The GatDE system is specific for glutamate and does not act on aspartate. This chain is Glutamyl-tRNA(Gln) amidotransferase subunit E, found in Pyrobaculum calidifontis (strain DSM 21063 / JCM 11548 / VA1).